Consider the following 469-residue polypeptide: 3-isopropylmalate dehydratase large subunit (469 aa).

Residues cysteine 350, cysteine 410, and cysteine 413 each contribute to the [4Fe-4S] cluster site.

The protein belongs to the aconitase/IPM isomerase family. LeuC type 1 subfamily. As to quaternary structure, heterodimer of LeuC and LeuD. The cofactor is [4Fe-4S] cluster.

The catalysed reaction is (2R,3S)-3-isopropylmalate = (2S)-2-isopropylmalate. It functions in the pathway amino-acid biosynthesis; L-leucine biosynthesis; L-leucine from 3-methyl-2-oxobutanoate: step 2/4. In terms of biological role, catalyzes the isomerization between 2-isopropylmalate and 3-isopropylmalate, via the formation of 2-isopropylmaleate. In Rhizobium leguminosarum bv. trifolii (strain WSM2304), this protein is 3-isopropylmalate dehydratase large subunit.